Here is a 211-residue protein sequence, read N- to C-terminus: Urease accessory protein UreG (211 aa).

A GTP-binding site is contributed by Gly-11 to Thr-18.

This sequence belongs to the SIMIBI class G3E GTPase family. UreG subfamily. Homodimer. UreD, UreF and UreG form a complex that acts as a GTP-hydrolysis-dependent molecular chaperone, activating the urease apoprotein by helping to assemble the nickel containing metallocenter of UreC. The UreE protein probably delivers the nickel.

The protein resides in the cytoplasm. Facilitates the functional incorporation of the urease nickel metallocenter. This process requires GTP hydrolysis, probably effectuated by UreG. The chain is Urease accessory protein UreG from Actinobacillus pleuropneumoniae (Haemophilus pleuropneumoniae).